We begin with the raw amino-acid sequence, 328 residues long: L-tyrosine isonitrile synthase (328 aa).

It belongs to the isocyanide synthase family. In terms of assembly, monomer in solution.

It carries out the reaction D-ribulose 5-phosphate + L-tyrosine = (2S)-3-(4-hydroxyphenyl)-2-isocyanopropanoate + hydroxyacetone + formaldehyde + phosphate + H2O + H(+). Its function is as follows. Involved in the biosynthesis of paerucumarin, a cyclized isocyano derivative of tyrosine. Responsible for the synthesis of the isonitrile group on tyrosine using the C2 of ribulose 5-phosphate as the source of the carbon atom. This Pseudomonas aeruginosa (strain ATCC 15692 / DSM 22644 / CIP 104116 / JCM 14847 / LMG 12228 / 1C / PRS 101 / PAO1) protein is L-tyrosine isonitrile synthase.